A 936-amino-acid polypeptide reads, in one-letter code: Sine oculis-binding protein homolog A (936 aa).

The segment covering 1–14 (MAEMEKEGRPPESK) has biased composition (basic and acidic residues). Disordered regions lie at residues 1–46 (MAEM…GQAG) and 108–151 (ASTL…HGGL). Positions 108-144 (ASTLENSSGSPPHANSSGSTPTSRNGVTAESSVNPSS) are enriched in polar residues. 2 consecutive FCS-type zinc fingers follow at residues 169-207 (EDSSNVQIMCAWCQKVGVKRYSLSMGSELKSFCSEKCFA) and 247-287 (LKTN…KCLN). Disordered regions lie at residues 311-330 (LPTSDTKSESGAGVQLLTPE), 336-424 (LSEL…VMTP), 486-511 (SPHLHPSSTPTLSGNPPGIMPPHPAA), 574-632 (NPQR…KQTE), 697-727 (PPPALLGETELDGSTSISTGTAKDDHRDTYS), and 842-877 (DSAGKRCSNDQSAITTGTGDDKSQSPEDDPSGEDHA). Residues 349–382 (GATIAGPSGSTSGSPSEAGTVCSSSSSSSSSSSS) show a composition bias toward low complexity. The segment covering 395–404 (SLPPPHPPPI) has biased composition (pro residues). Polar residues-rich tracts occupy residues 617-632 (PPNSDTLSPEFSKQTE), 708-717 (DGSTSISTGT), and 850-859 (NDQSAITTGT).

It belongs to the SOBP family.

Its function is as follows. Implicated in development of the cochlea. This is Sine oculis-binding protein homolog A (sobpa) from Danio rerio (Zebrafish).